The sequence spans 343 residues: Aspartate beta-hydroxylase domain-containing protein 2 (343 aa).

Residues 1–31 lie on the Cytoplasmic side of the membrane; that stretch reads MWLEWLVAWSWSLDGLRDCIATGIQSVRDCD. The helical transmembrane segment at 32–52 threads the bilayer; it reads GTAVITVACLLVLFVWYCYHV. Residues 53-343 lie on the Lumenal side of the membrane; it reads GREQPRPHVS…ALDFIFAPGR (291 aa). N-linked (GlcNAc...) asparagine glycosylation is found at N77 and N185. Residues W202 and S246 each coordinate 2-oxoglutarate. Position 257 (H257) interacts with Fe cation. 2-oxoglutarate is bound at residue 266–268; the sequence is RCH. H302 provides a ligand contact to Fe cation. R315 provides a ligand contact to 2-oxoglutarate.

This sequence belongs to the aspartyl/asparaginyl beta-hydroxylase family. Fe cation serves as cofactor.

It localises to the membrane. Its function is as follows. May function as 2-oxoglutarate-dependent dioxygenase. In Rattus norvegicus (Rat), this protein is Aspartate beta-hydroxylase domain-containing protein 2 (Asphd2).